The following is a 437-amino-acid chain: ATP-dependent RNA helicase SUB2 (437 aa).

Residues 1–19 (MSHEAEEDLLEYSDNEQEV) show a composition bias toward acidic residues. The tract at residues 1–45 (MSHEAEEDLLEYSDNEQEVQVDNKATEVNAEGNGESQAKDSDKKG) is disordered. Positions 53–81 (TGFKDFLLKPELSRAIIDCGFEHPSEVQQ) match the Q motif motif. The Helicase ATP-binding domain maps to 84-259 (IPQSIHGTDV…RRFLQNPLEI (176 aa)). 97–104 (AKSGLGKT) contributes to the ATP binding site. Positions 206–209 (DECD) match the DECD box motif. The Helicase C-terminal domain occupies 287 to 432 (KLAQLLDDLE…EFPEEGVDPS (146 aa)).

It belongs to the DEAD box helicase family. DECD subfamily.

Its subcellular location is the nucleus. It carries out the reaction ATP + H2O = ADP + phosphate + H(+). ATP-binding RNA helicase involved in transcription elongation and required for the export of mRNA out of the nucleus. SUB2 also plays a role in pre-mRNA splicing and spliceosome assembly. May be involved in rDNA and telomeric silencing, and maintenance of genome integrity. This chain is ATP-dependent RNA helicase SUB2 (SUB2), found in Kluyveromyces lactis (strain ATCC 8585 / CBS 2359 / DSM 70799 / NBRC 1267 / NRRL Y-1140 / WM37) (Yeast).